The following is a 289-amino-acid chain: 4-hydroxybenzoate octaprenyltransferase (289 aa).

Helical transmembrane passes span 21 to 40 (PIGT…LAAG), 95 to 115 (VLAL…TMNS), 116 to 136 (LTIA…FMKR), 138 to 158 (IPIP…MAYA), 161 to 181 (ANAL…WTIA), 213 to 233 (IIGV…QLMG), 236 to 256 (AWYY…QRLI), and 268 to 288 (FLNN…NYLL).

The protein belongs to the UbiA prenyltransferase family. Mg(2+) is required as a cofactor.

It is found in the cell inner membrane. It carries out the reaction all-trans-octaprenyl diphosphate + 4-hydroxybenzoate = 4-hydroxy-3-(all-trans-octaprenyl)benzoate + diphosphate. It functions in the pathway cofactor biosynthesis; ubiquinone biosynthesis. Functionally, catalyzes the prenylation of para-hydroxybenzoate (PHB) with an all-trans polyprenyl group. Mediates the second step in the final reaction sequence of ubiquinone-8 (UQ-8) biosynthesis, which is the condensation of the polyisoprenoid side chain with PHB, generating the first membrane-bound Q intermediate 3-octaprenyl-4-hydroxybenzoate. The chain is 4-hydroxybenzoate octaprenyltransferase from Aeromonas salmonicida (strain A449).